The following is a 1564-amino-acid chain: Abnormal spindle-like microcephaly-associated protein homolog (1564 aa).

IQ domains lie at 31-60, 220-251, 270-299, 293-322, 366-395, 389-420, 439-468, 462-491, 512-541, 535-566, 608-639, 658-687, 681-712, 731-762, 754-785, 804-835, 827-856, 877-908, 900-931, 949-980, 972-1003, 1022-1053, 1045-1076, 1095-1126, 1168-1199, 1304-1333, 1327-1358, 1377-1406, 1452-1483, 1474-1503, and 1500-1531; these read YLWA…MLKS, LKKN…VIIQ, TRSA…SVIK, ILTS…ATIK, MRES…AVIS, QRKA…IIIQ, VKKA…AAVK, QSVA…SIIK, AKAA…AAMK, EHQA…LVIQ, QHTC…LLIQ, TKAA…AAIT, CNTA…IIIQ, LKKT…TFIK, MHRA…IVIQ, ILKA…TLIQ, LRIA…ITRT, LRHS…TLIQ, MHIA…IWIQ, LQNA…AFIQ, MHRA…VVIQ, QRYS…ILIQ, MYFS…IFIQ, LRKA…VLIQ, QWHS…IIIQ, HTQA…AATR, MHLA…VIIQ, VQKS…EKMA, QSRA…RIQS, QKCA…QKRA, and QKRA…VVLQ.

It localises to the cytoplasm. It is found in the nucleus. Functionally, probable role in mitotic spindle regulation and coordination of mitotic processes. May have a preferential role in regulating neurogenesis. This chain is Abnormal spindle-like microcephaly-associated protein homolog (ASPM), found in Ateles geoffroyi (Black-handed spider monkey).